Consider the following 256-residue polypeptide: Thiazole synthase (256 aa).

The active-site Schiff-base intermediate with DXP is the lysine 95. 1-deoxy-D-xylulose 5-phosphate is bound by residues glycine 156, 182 to 183 (AG), and 204 to 205 (NT).

The protein belongs to the ThiG family. As to quaternary structure, homotetramer. Forms heterodimers with either ThiH or ThiS.

It localises to the cytoplasm. The enzyme catalyses [ThiS sulfur-carrier protein]-C-terminal-Gly-aminoethanethioate + 2-iminoacetate + 1-deoxy-D-xylulose 5-phosphate = [ThiS sulfur-carrier protein]-C-terminal Gly-Gly + 2-[(2R,5Z)-2-carboxy-4-methylthiazol-5(2H)-ylidene]ethyl phosphate + 2 H2O + H(+). Its pathway is cofactor biosynthesis; thiamine diphosphate biosynthesis. Functionally, catalyzes the rearrangement of 1-deoxy-D-xylulose 5-phosphate (DXP) to produce the thiazole phosphate moiety of thiamine. Sulfur is provided by the thiocarboxylate moiety of the carrier protein ThiS. In vitro, sulfur can be provided by H(2)S. The sequence is that of Thiazole synthase from Shigella dysenteriae serotype 1 (strain Sd197).